The sequence spans 365 residues: 3-dehydroquinate synthase (365 aa).

Residues Asp-75 to Lys-80, Gly-109 to Asp-113, Thr-133 to Thr-134, Lys-146, and Lys-155 each bind NAD(+). Zn(2+) contacts are provided by Glu-188, His-253, and His-269.

It belongs to the sugar phosphate cyclases superfamily. Dehydroquinate synthase family. It depends on Co(2+) as a cofactor. Zn(2+) serves as cofactor. The cofactor is NAD(+).

It localises to the cytoplasm. The enzyme catalyses 7-phospho-2-dehydro-3-deoxy-D-arabino-heptonate = 3-dehydroquinate + phosphate. Its pathway is metabolic intermediate biosynthesis; chorismate biosynthesis; chorismate from D-erythrose 4-phosphate and phosphoenolpyruvate: step 2/7. Catalyzes the conversion of 3-deoxy-D-arabino-heptulosonate 7-phosphate (DAHP) to dehydroquinate (DHQ). The protein is 3-dehydroquinate synthase of Corynebacterium glutamicum (strain R).